The following is a 474-amino-acid chain: Siroheme synthase (474 aa).

The interval M1–L203 is precorrin-2 dehydrogenase /sirohydrochlorin ferrochelatase. NAD(+)-binding positions include E22–V23 and A43–S44. Residues G219 to G474 form a uroporphyrinogen-III C-methyltransferase region. An S-adenosyl-L-methionine-binding site is contributed by P228. D251 acts as the Proton acceptor in catalysis. K273 functions as the Proton donor in the catalytic mechanism. S-adenosyl-L-methionine-binding positions include G304–D306, I309, T334–A335, M387, and G416.

In the N-terminal section; belongs to the precorrin-2 dehydrogenase / sirohydrochlorin ferrochelatase family. This sequence in the C-terminal section; belongs to the precorrin methyltransferase family.

It carries out the reaction uroporphyrinogen III + 2 S-adenosyl-L-methionine = precorrin-2 + 2 S-adenosyl-L-homocysteine + H(+). The enzyme catalyses precorrin-2 + NAD(+) = sirohydrochlorin + NADH + 2 H(+). It catalyses the reaction siroheme + 2 H(+) = sirohydrochlorin + Fe(2+). It functions in the pathway cofactor biosynthesis; adenosylcobalamin biosynthesis; precorrin-2 from uroporphyrinogen III: step 1/1. Its pathway is cofactor biosynthesis; adenosylcobalamin biosynthesis; sirohydrochlorin from precorrin-2: step 1/1. It participates in porphyrin-containing compound metabolism; siroheme biosynthesis; precorrin-2 from uroporphyrinogen III: step 1/1. The protein operates within porphyrin-containing compound metabolism; siroheme biosynthesis; siroheme from sirohydrochlorin: step 1/1. It functions in the pathway porphyrin-containing compound metabolism; siroheme biosynthesis; sirohydrochlorin from precorrin-2: step 1/1. Its function is as follows. Multifunctional enzyme that catalyzes the SAM-dependent methylations of uroporphyrinogen III at position C-2 and C-7 to form precorrin-2 via precorrin-1. Then it catalyzes the NAD-dependent ring dehydrogenation of precorrin-2 to yield sirohydrochlorin. Finally, it catalyzes the ferrochelation of sirohydrochlorin to yield siroheme. The polypeptide is Siroheme synthase (Methylococcus capsulatus (strain ATCC 33009 / NCIMB 11132 / Bath)).